The primary structure comprises 246 residues: Probable S-methyl-5'-thioinosine phosphorylase (246 aa).

Phosphate contacts are provided by residues Thr-10 and 52 to 53; that span reads RH. Met-185 lines the substrate pocket. Residue Thr-186 participates in phosphate binding. A substrate-binding site is contributed by 209–211; that stretch reads NPA.

This sequence belongs to the PNP/MTAP phosphorylase family. MTAP subfamily. In terms of assembly, homotrimer.

It catalyses the reaction S-methyl-5'-thioinosine + phosphate = 5-(methylsulfanyl)-alpha-D-ribose 1-phosphate + hypoxanthine. Its pathway is purine metabolism; purine nucleoside salvage. In terms of biological role, catalyzes the reversible phosphorylation of S-methyl-5'-thioinosine (MTI) to hypoxanthine and 5-methylthioribose-1-phosphate. Involved in the breakdown of S-methyl-5'-thioadenosine (MTA), a major by-product of polyamine biosynthesis. Catabolism of (MTA) occurs via deamination to MTI and phosphorolysis to hypoxanthine. The sequence is that of Probable S-methyl-5'-thioinosine phosphorylase from Pseudomonas syringae pv. tomato (strain ATCC BAA-871 / DC3000).